Consider the following 122-residue polypeptide: Basic phospholipase A2 Ts-G6D49 (122 aa).

Cystine bridges form between cysteine 26–cysteine 115, cysteine 28–cysteine 44, cysteine 43–cysteine 95, cysteine 49–cysteine 122, cysteine 50–cysteine 88, cysteine 57–cysteine 81, and cysteine 75–cysteine 86. Ca(2+) contacts are provided by tyrosine 27, glycine 29, and glycine 31. Histidine 47 is a catalytic residue. Residue aspartate 48 coordinates Ca(2+). Aspartate 89 is a catalytic residue.

Ca(2+) serves as cofactor. In terms of tissue distribution, expressed by the venom gland.

Its subcellular location is the secreted. The catalysed reaction is a 1,2-diacyl-sn-glycero-3-phosphocholine + H2O = a 1-acyl-sn-glycero-3-phosphocholine + a fatty acid + H(+). Functionally, snake venom phospholipase A2 that induces fast and sustaining local edema a few hours after injection (5-10 ug) in the hind paw, and prolongs the coagulation time of human plasma. Exhibits moderate hydrolytic activities and prefers the zwitterionic micelles (dPPC with Triton X-100) to the anionic micelles (dPPC with deoxycholate). PLA2 catalyzes the calcium-dependent hydrolysis of the 2-acyl groups in 3-sn-phosphoglycerides. The chain is Basic phospholipase A2 Ts-G6D49 from Trimeresurus stejnegeri (Chinese green tree viper).